A 233-amino-acid chain; its full sequence is Ras-related protein RABA6a (233 aa).

Residue 20 to 27 (GDSAVGKS) participates in GTP binding. Residues 42–50 (SKPTIGVEF) carry the Effector region motif. GTP-binding positions include 68-72 (DTAGQ), 126-129 (NKSD), and 156-157 (SA). S-geranylgeranyl cysteine attachment occurs at residues C230 and C231.

This sequence belongs to the small GTPase superfamily. Rab family.

The protein resides in the cell membrane. In terms of biological role, intracellular vesicle trafficking and protein transport. This is Ras-related protein RABA6a (RABA6A) from Arabidopsis thaliana (Mouse-ear cress).